The following is a 441-amino-acid chain: GTPase Der (441 aa).

EngA-type G domains are found at residues 3–167 and 176–351; these read PLIA…PKGS and TKIA…EQFA. Residues 9–16, 56–60, 119–122, 182–189, 229–233, and 294–297 each bind GTP; these read GRPNVGKS, DTGGF, NKID, DTAGI, and NKWD. The 85-residue stretch at 352–436 folds into the KH-like domain; it reads RRITTSDLNR…PMRLLFKGRE (85 aa).

Belongs to the TRAFAC class TrmE-Era-EngA-EngB-Septin-like GTPase superfamily. EngA (Der) GTPase family. As to quaternary structure, associates with the 50S ribosomal subunit.

Functionally, GTPase that plays an essential role in the late steps of ribosome biogenesis. The polypeptide is GTPase Der (Geotalea uraniireducens (strain Rf4) (Geobacter uraniireducens)).